Reading from the N-terminus, the 404-residue chain is Serine/threonine-protein phosphatase 2A regulatory subunit rsa-1 (404 aa).

In terms of assembly, part of a complex consisting of a common heterodimeric core enzyme, composed of catalytic subunit let-92 and constant regulatory subunit paa-1, that associates with a variety of regulatory subunits which confer distinct properties to the holoenzyme. Interacts with rsa-2, spd-5 and tpxl-1.

It is found in the cytoplasm. The protein localises to the cytoskeleton. The protein resides in the microtubule organizing center. Its subcellular location is the centrosome. Functionally, regulatory subunit of phosphatase let-92 which recruits let-92/paa-1 complex to the centrosomes, thereby regulating microtubule outgrowth from centrosomes and mitotic spindle assembly ensuring the stability of kinetochore microtubules. The polypeptide is Serine/threonine-protein phosphatase 2A regulatory subunit rsa-1 (Caenorhabditis elegans).